A 128-amino-acid chain; its full sequence is Small ribosomal subunit protein uS9 (128 aa).

It belongs to the universal ribosomal protein uS9 family.

This chain is Small ribosomal subunit protein uS9, found in Cytophaga hutchinsonii (strain ATCC 33406 / DSM 1761 / CIP 103989 / NBRC 15051 / NCIMB 9469 / D465).